A 369-amino-acid chain; its full sequence is uncharacterized protein (369 aa).

Belongs to the myo-inositol 1-phosphate synthase family.

This is an uncharacterized protein from Mycobacterium leprae (strain TN).